The sequence spans 75 residues: Neuropeptide-like protein 31 (75 aa).

The N-terminal stretch at 1 to 22 (MISTSSILVLVVLLACFMAANA) is a signal peptide. Tyrosine amide is present on residues Tyr29, Tyr39, Tyr49, Tyr56, and Tyr64. At Trp73 the chain carries Tryptophan amide.

The protein belongs to the YARP (YGGW-amide related peptide) family. As to expression, expressed in hypoderm.

The protein resides in the secreted. Its function is as follows. Antimicrobial peptides that have antifungal activity against D.coniospora. Has weak antibacterial activity against Gram-positive bacteria M.luteus and Gram-negative E.coli. The polypeptide is Neuropeptide-like protein 31 (nlp-31) (Caenorhabditis elegans).